A 278-amino-acid chain; its full sequence is Pantothenate synthetase (278 aa).

28–35 (MGNLHAGH) is a binding site for ATP. Residue His35 is the Proton donor of the active site. Gln59 is a (R)-pantoate binding site. Gln59 lines the beta-alanine pocket. 145–148 (GKKD) lines the ATP pocket. Residue Gln151 coordinates (R)-pantoate. 182 to 185 (LSSR) contacts ATP.

Belongs to the pantothenate synthetase family. As to quaternary structure, homodimer.

The protein localises to the cytoplasm. The catalysed reaction is (R)-pantoate + beta-alanine + ATP = (R)-pantothenate + AMP + diphosphate + H(+). Its pathway is cofactor biosynthesis; (R)-pantothenate biosynthesis; (R)-pantothenate from (R)-pantoate and beta-alanine: step 1/1. Its function is as follows. Catalyzes the condensation of pantoate with beta-alanine in an ATP-dependent reaction via a pantoyl-adenylate intermediate. The protein is Pantothenate synthetase of Methylobacillus flagellatus (strain ATCC 51484 / DSM 6875 / VKM B-1610 / KT).